The chain runs to 156 residues: Arginine repressor (156 aa).

It belongs to the ArgR family.

It is found in the cytoplasm. It functions in the pathway amino-acid biosynthesis; L-arginine biosynthesis [regulation]. Its function is as follows. Regulates arginine biosynthesis genes. The sequence is that of Arginine repressor from Klebsiella pneumoniae (strain 342).